The primary structure comprises 123 residues: Crossover junction endodeoxyribonuclease Hjc (123 aa).

Glu9 lines the Mg(2+) pocket. Ser29 is a catalytic residue. Positions 33 and 46 each coordinate Mg(2+).

Belongs to the Holliday junction resolvase Hjc family. In terms of assembly, homodimer. Probably interacts with PCNA and RadB. Requires Mg(2+) as cofactor. The cofactor is Mn(2+).

It carries out the reaction Endonucleolytic cleavage at a junction such as a reciprocal single-stranded crossover between two homologous DNA duplexes (Holliday junction).. Its activity is regulated as follows. Cleavage inhibited by RadB in the absence (but not presence) of ATP. Functionally, a structure-specific endonuclease that resolves Holliday junction (HJ) intermediates during genetic recombination. Cleaves 4-way DNA junctions introducing paired nicks in opposing strands, leaving a 5'-terminal phosphate and a 3'-terminal hydroxyl group that are subsequently ligated to produce recombinant products. Cleaves both mobile and immobile junctions. Binds 4-way junction DNA, a synthetic Hj, binding is not competed by dsDNA. In Pyrococcus furiosus (strain ATCC 43587 / DSM 3638 / JCM 8422 / Vc1), this protein is Crossover junction endodeoxyribonuclease Hjc.